The primary structure comprises 596 residues: Endoribonuclease ZC3H12A (596 aa).

2 disordered regions span residues 1-48 and 97-134; these read MSDP…TSEL and QALT…EGSD. Over residues 10–19 the composition is skewed to polar residues; sequence VQESNPTMSL. The segment at 42–87 is ubiquitin association domain; the sequence is EAPTSELQMKVDFFRKLGYSSSEIHSVLQKLGVQADTNTVLGELVK. The segment at 81–150 is necessary for interaction with TANK; the sequence is VLGELVKHGS…DGSNVAMSHG (70 aa). The segment at 112–281 is RNase; that stretch reads GGSTPKPSTL…DKFMPPDDPL (170 aa). One can recognise an RNase NYN domain in the interval 135–290; the sequence is LRPVVIDGSN…LGRHGPSLDN (156 aa). The tract at residues 214–220 is RNA binding; the sequence is RRVGGKR. Asp226 serves as a coordination point for Mg(2+). 2 disordered regions span residues 278–306 and 340–417; these read DDPL…KQPC and NALL…PTEW. The C3H1-type zinc finger occupies 301 to 324; sequence HRKQPCPYGKKCTYGIKCRFFHPE. Residues 301 to 454 form a necessary for interaction with ZC3H12D region; sequence HRKQPCPYGK…SELWGVRGGS (154 aa). Ser344 is modified (phosphoserine). Residues 356–368 show a composition bias toward low complexity; the sequence is QRPSPASQSSSVS. Phosphoserine is present on residues Ser435 and Ser439. The disordered stretch occupies residues 511-543; that stretch reads YWSEPYPLPPPTPVLQEPQRPSPGAGGGPWGRV. A compositionally biased stretch (low complexity) spans 524-533; sequence VLQEPQRPSP.

This sequence belongs to the ZC3H12 family. Oligomer. Found in a deubiquitination complex with TANK, USP10 and ZC3H12A; this complex inhibits genotoxic stress- or interleukin-1-beta-mediated NF-kappaB activation by promoting IKBKG or TRAF6 deubiquitination. Interacts with IKBKG; this interaction increases in response to DNA damage. Interacts with TANK; this interaction increases in response to DNA damage and serves as a bridge to anchor both TANK and USP10 into a deubiquitinating complex. Interacts with TRAF6; this interaction increases in response to DNA damage and is stimulated by TANK. Interacts with USP10; this interaction increases in response to DNA damage and serves as a bridge to anchor both TANK and USP10 into a deubiquitinating complex. Interacts with ZC3H12D. Interacts with TNRC6A. Interacts with IKBKB/IKKB. Interacts with IKBKB/IKKB. Interacts with IKBKB/IKKB. Interacts with BTRC; the interaction occurs when ZC3H12A is phosphorylated in a IKBKB/IKKB-dependent manner. Interacts with IRAK1; this interaction increases the interaction between ZC3H12A and IKBKB/IKKB. Interacts with UPF1; this interaction occurs in a mRNA translationally active- and termination-dependent manner and is essential for ZC3H12A-mediated degradation of target mRNAs. Associates with ribosomes. Interacts with ubiquitin. Mg(2+) serves as cofactor. In terms of processing, proteolytically cleaved between Arg-111 and Arg-214 by MALT1 in activated T-cells; cleavage at Arg-111 is critical for promoting ZC3H12A degradation in response to T-cell receptor (TCR) stimulation, and hence is necessary for prolonging the stability of a set of mRNAs controlling T-cell activation and Th17 cell differentiation. Post-translationally, phosphorylated by IRAK1; phosphorylation is necessary for subsequent phosphorylation by the I-kappa-B-kinase (IKK) complex. Phosphorylated by I-kappa-B-kinases (IKKs) at Ser-435 and Ser-439 upon lipopolysaccharide (LPS) or IL1B stimulation in macrophages through the MyD88-dependent signaling pathway; these phosphorylations promote rapid ubiquitin proteasome-mediated degradation of ZC3H12A in macrophages and hence allows its target mRNAs, such as IL6, to escape from degradation and accumulate during the inflammatory response. Ubiquitinated; ubiquitination is induced in response to interleukin IL1 receptor stimuli in a IKBKB/IKKB and IRAK1-dependent manner, leading to proteasome-mediated degradation. As to expression, expressed in CD4(+) helper T-cells (at protein level). Highly expressed in macrophages. Expressed in lung, lymph nodes, spleen and thymus. Expressed weakly in heart. Expressed weakly in cardiomyocytes (at protein level). Expressed in spleen, lung, intestine, brown adipose tissue and thymus. Weakly expressed in the heart. Weakly expressed in cardiomyocytes.

It is found in the nucleus. The protein resides in the cytoplasm. The protein localises to the rough endoplasmic reticulum membrane. It localises to the cytoplasmic granule. Its subcellular location is the P-body. Endoribonuclease involved in various biological functions such as cellular inflammatory response and immune homeostasis, glial differentiation of neuroprogenitor cells, cell death of cardiomyocytes, adipogenesis and angiogenesis. Functions as an endoribonuclease involved in mRNA decay. Modulates the inflammatory response by promoting the degradation of a set of translationally active cytokine-induced inflammation-related mRNAs, such as IL6 and IL12B, during the early phase of inflammation. Prevents aberrant T-cell-mediated immune reaction by degradation of multiple mRNAs controlling T-cell activation, such as those encoding cytokines (IL6 and IL2), cell surface receptors (ICOS, TNFRSF4 and TNFR2) and transcription factor (REL). Inhibits cooperatively with ZC3H12A the differentiation of helper T cells Th17 in lungs. They repress target mRNA encoding the Th17 cell-promoting factors IL6, ICOS, REL, IRF4, NFKBID and NFKBIZ. The cooperation requires RNA-binding by RC3H1 and the nuclease activity of ZC3H12A. Together with RC3H1, destabilizes TNFRSF4/OX40 mRNA by binding to the conserved stem loop structure in its 3'UTR. Self regulates by destabilizing its own mRNA. Cleaves mRNA harboring a stem-loop (SL), often located in their 3'-UTRs, during the early phase of inflammation in a helicase UPF1-dependent manner. Plays a role in the inhibition of microRNAs (miRNAs) biogenesis. Cleaves the terminal loop of a set of precursor miRNAs (pre-miRNAs) important for the regulation of the inflammatory response leading to their degradation, and thus preventing the biosynthesis of mature miRNAs. Also plays a role in promoting angiogenesis in response to inflammatory cytokines by inhibiting the production of antiangiogenic microRNAs via its anti-dicer RNase activity. Affects the overall ubiquitination of cellular proteins. Positively regulates deubiquitinase activity promoting the cleavage at 'Lys-48'- and 'Lys-63'-linked polyubiquitin chains on TNF receptor-associated factors (TRAFs), preventing JNK and NF-kappa-B signaling pathway activation, and hence negatively regulating macrophage-mediated inflammatory response and immune homeostasis. Induces also deubiquitination of the transcription factor HIF1A, probably leading to its stabilization and nuclear import, thereby positively regulating the expression of proangiogenic HIF1A-targeted genes. Involved in a TANK-dependent negative feedback response to attenuate NF-kappaB activation through the deubiquitination of IKBKG or TRAF6 in response to interleukin-1-beta (IL1B) stimulation or upon DNA damage. Prevents stress granules (SGs) formation and promotes macrophage apoptosis under stress conditions, including arsenite-induced oxidative stress, heat shock, and energy deprivation. Plays a role in the regulation of macrophage polarization; promotes IL4-induced polarization of macrophages M1 into anti-inflammatory M2 state. May also act as a transcription factor that regulates the expression of multiple genes involved in inflammatory response, angiogenesis, adipogenesis and apoptosis. Functions as a positive regulator of glial differentiation of neuroprogenitor cells through an amyloid precursor protein (APP)-dependent signaling pathway. Attenuates septic myocardial contractile dysfunction in response to lipopolysaccharide (LPS) by reducing I-kappa-B-kinase (IKK)-mediated NF-kappa-B activation, and hence myocardial pro-inflammatory cytokine production. The sequence is that of Endoribonuclease ZC3H12A from Mus musculus (Mouse).